The sequence spans 359 residues: Thymidine kinase (359 aa).

Residue 17-24 coordinates ATP; that stretch reads GAHGLGKT. The active-site Proton acceptor is E45. Position 99 (Q99) interacts with substrate. Position 187 (R187) interacts with ATP. R193 contributes to the substrate binding site.

It belongs to the herpesviridae thymidine kinase family. As to quaternary structure, homodimer.

It catalyses the reaction thymidine + ATP = dTMP + ADP + H(+). Its function is as follows. Catalyzes the transfer of the gamma-phospho group of ATP to thymidine to generate dTMP in the salvage pathway of pyrimidine synthesis. The dTMP serves as a substrate for DNA polymerase during viral DNA replication. Allows the virus to be reactivated and to grow in non-proliferative cells lacking a high concentration of phosphorylated nucleic acid precursors. This Bos taurus (Bovine) protein is Thymidine kinase.